We begin with the raw amino-acid sequence, 330 residues long: tRNA uridine(34) hydroxylase (330 aa).

In terms of domain architecture, Rhodanese spans 123–217; it reads SDPEVILVDT…YLEEVKQEES (95 aa). The active-site Cysteine persulfide intermediate is C177.

Belongs to the TrhO family.

The enzyme catalyses uridine(34) in tRNA + AH2 + O2 = 5-hydroxyuridine(34) in tRNA + A + H2O. Catalyzes oxygen-dependent 5-hydroxyuridine (ho5U) modification at position 34 in tRNAs. In Shewanella sp. (strain MR-4), this protein is tRNA uridine(34) hydroxylase.